The sequence spans 134 residues: Large ribosomal subunit protein uL16c (134 aa).

The protein belongs to the universal ribosomal protein uL16 family. As to quaternary structure, part of the 50S ribosomal subunit.

It is found in the plastid. The protein resides in the chloroplast. The sequence is that of Large ribosomal subunit protein uL16c from Pinus thunbergii (Japanese black pine).